Here is a 381-residue protein sequence, read N- to C-terminus: O-antigen chain mannosyltransferase B (381 aa).

It belongs to the glycosyltransferase group 1 family. Glycosyltransferase 4 subfamily.

It catalyses the reaction alpha-D-mannosyl-(1-&gt;3)-N-acetyl-alpha-D-glucosaminyl-di-trans,octa-cis-undecaprenyl diphosphate + 2 GDP-alpha-D-mannose = alpha-D-mannosyl-(1-&gt;3)-alpha-D-mannosyl-(1-&gt;3)-alpha-D-mannosyl-(1-&gt;3)-N-acetyl-alpha-D-glucosaminyl-di-trans,octa-cis-undecaprenyl diphosphate + 2 GDP + 2 H(+). Its pathway is bacterial outer membrane biogenesis; LPS O-antigen biosynthesis. In terms of biological role, mannosyltransferase involved in the biosynthesis of the repeat unit of the lipopolysaccharide (LPS) O-antigen region. Catalyzes the transfer of two alpha-(1-&gt;3)-linked mannose residues to the product of the WbdC enzyme during the synthesis of the adapter region. This chain is O-antigen chain mannosyltransferase B, found in Escherichia coli.